The following is a 523-amino-acid chain: 2-isopropylmalate synthase (523 aa).

The region spanning 5–267 is the Pyruvate carboxyltransferase domain; sequence VIIFDTTLRD…HTAINHQEIW (263 aa). The Mn(2+) site is built by Asp14, His202, His204, and Asn238. The tract at residues 392-523 is regulatory domain; that stretch reads RLDYFSVQSG…QHNENNKETV (132 aa).

The protein belongs to the alpha-IPM synthase/homocitrate synthase family. LeuA type 1 subfamily. In terms of assembly, homodimer. Mn(2+) serves as cofactor.

The protein resides in the cytoplasm. It catalyses the reaction 3-methyl-2-oxobutanoate + acetyl-CoA + H2O = (2S)-2-isopropylmalate + CoA + H(+). The protein operates within amino-acid biosynthesis; L-leucine biosynthesis; L-leucine from 3-methyl-2-oxobutanoate: step 1/4. Catalyzes the condensation of the acetyl group of acetyl-CoA with 3-methyl-2-oxobutanoate (2-ketoisovalerate) to form 3-carboxy-3-hydroxy-4-methylpentanoate (2-isopropylmalate). This Escherichia coli (strain SMS-3-5 / SECEC) protein is 2-isopropylmalate synthase.